Here is a 464-residue protein sequence, read N- to C-terminus: MTVKTRFAPSPTGYLHIGGVRTALFSWAFARHHKGEFLLRIEDTDLARSTAESVNIILDGMKWVGLDYDNADNVVYQTRRFDRYKEVIAELLAKGDAYYCYCSKEELEAMREKAEKEGTATYDRRWRPEAGKTLPEIPAGVQPVVRFKTPLDGVTKWTDLVKGEISIPNEALDDLIIARADGTPTYNFCAVVDDYDMGVTHIIRGDDHVNNTPKQINILKAIGANLPEYGHLPMILNEQGKKISKRSGDTVAITDFGAMGILPEAMLNYLARLGWAHGDDEFFTTEQFIEWFDLKDVSPSPSRMDLKKLYWINGEHIKITPDGKLTELVKPRLALRDIHETEKPALEDVLALVKDRAQDLNALADECLYFYKKQVPAEADVAKHWDDEAAARMLRFAERLEGLEDWNAKAIHDLFKPFCDEEGIKMGKLGMPLRLAVCGTAKTPSVDAVLALISKEEVLKRIRA.

A 'HIGH' region motif is present at residues 9 to 19 (PSPTGYLHIGG). Positions 242–246 (KISKR) match the 'KMSKS' region motif. Lys245 is an ATP binding site.

It belongs to the class-I aminoacyl-tRNA synthetase family. Glutamate--tRNA ligase type 1 subfamily. As to quaternary structure, monomer.

The protein localises to the cytoplasm. The enzyme catalyses tRNA(Glu) + L-glutamate + ATP = L-glutamyl-tRNA(Glu) + AMP + diphosphate. Catalyzes the attachment of glutamate to tRNA(Glu) in a two-step reaction: glutamate is first activated by ATP to form Glu-AMP and then transferred to the acceptor end of tRNA(Glu). The sequence is that of Glutamate--tRNA ligase from Neisseria gonorrhoeae (strain NCCP11945).